Here is a 217-residue protein sequence, read N- to C-terminus: ATP phosphoribosyltransferase (217 aa).

The protein belongs to the ATP phosphoribosyltransferase family. Short subfamily. In terms of assembly, heteromultimer composed of HisG and HisZ subunits.

It localises to the cytoplasm. It catalyses the reaction 1-(5-phospho-beta-D-ribosyl)-ATP + diphosphate = 5-phospho-alpha-D-ribose 1-diphosphate + ATP. It functions in the pathway amino-acid biosynthesis; L-histidine biosynthesis; L-histidine from 5-phospho-alpha-D-ribose 1-diphosphate: step 1/9. Catalyzes the condensation of ATP and 5-phosphoribose 1-diphosphate to form N'-(5'-phosphoribosyl)-ATP (PR-ATP). Has a crucial role in the pathway because the rate of histidine biosynthesis seems to be controlled primarily by regulation of HisG enzymatic activity. The protein is ATP phosphoribosyltransferase of Synechococcus sp. (strain WH7803).